The chain runs to 260 residues: Phosphate import ATP-binding protein PstB 1 (260 aa).

An ABC transporter domain is found at 13–255 (ISARDLNVHY…PQHPLTQGYI (243 aa)). 45–52 (GPSGCGKS) lines the ATP pocket.

This sequence belongs to the ABC transporter superfamily. Phosphate importer (TC 3.A.1.7) family. In terms of assembly, the complex is composed of two ATP-binding proteins (PstB), two transmembrane proteins (PstC and PstA) and a solute-binding protein (PstS).

It localises to the cell inner membrane. It catalyses the reaction phosphate(out) + ATP + H2O = ADP + 2 phosphate(in) + H(+). Functionally, part of the ABC transporter complex PstSACB involved in phosphate import. Responsible for energy coupling to the transport system. The protein is Phosphate import ATP-binding protein PstB 1 of Paramagnetospirillum magneticum (strain ATCC 700264 / AMB-1) (Magnetospirillum magneticum).